A 151-amino-acid polypeptide reads, in one-letter code: Protein Smg homolog (151 aa).

It belongs to the Smg family.

The chain is Protein Smg homolog from Laribacter hongkongensis (strain HLHK9).